The sequence spans 200 residues: Ras-related protein Rab-10 (200 aa).

Ser18, Gly19, Val20, Gly21, Lys22, Thr23, Cys24, Asn35, Thr36, Ser40, and Thr41 together coordinate GTP. Position 23 (Thr23) interacts with Mg(2+). 2 short sequence motifs (switch) span residues 32 to 46 and 64 to 81; these read DAFN…GIDF and DTAG…YYRG. Mg(2+) contacts are provided by Thr41 and Asp64. GTP contacts are provided by Gly67, Asn122, Lys123, Asp125, Met126, Ser152, Ala153, and Lys154. Residues 181 to 200 form a disordered region; sequence RENVDISTTGGGTGLKKCCS. Residues Cys198 and Cys199 are each lipidated (S-geranylgeranyl cysteine).

This sequence belongs to the small GTPase superfamily. Rab family. It depends on Mg(2+) as a cofactor.

The protein resides in the cytoplasmic vesicle membrane. Its subcellular location is the golgi apparatus. The protein localises to the trans-Golgi network membrane. It localises to the endosome membrane. It is found in the recycling endosome membrane. The protein resides in the cytoplasmic vesicle. Its subcellular location is the phagosome membrane. The protein localises to the cell projection. It localises to the cilium. It is found in the endoplasmic reticulum membrane. The catalysed reaction is GTP + H2O = GDP + phosphate + H(+). Regulated by guanine nucleotide exchange factors (GEFs) which promote the exchange of bound GDP for free GTP. Regulated by GTPase activating proteins (GAPs) which increase the GTP hydrolysis activity. Inhibited by GDP dissociation inhibitors (GDIs) which prevent Rab-GDP dissociation. The small GTPases Rab are key regulators of intracellular membrane trafficking, from the formation of transport vesicles to their fusion with membranes. Rabs cycle between an inactive GDP-bound form and an active GTP-bound form that is able to recruit to membranes different set of downstream effectors directly responsible for vesicle formation, movement, tethering and fusion. That Rab is mainly involved in the biosynthetic transport of proteins from the Golgi to the plasma membrane. Also plays a specific role in asymmetric protein transport to the plasma membrane within the polarized neuron and epithelial cells. In neurons, it is involved in axonogenesis through regulation of vesicular membrane trafficking toward the axonal plasma membrane while in epithelial cells, it regulates transport from the Golgi to the basolateral membrane. Moreover, may play a role in the basolateral recycling pathway and in phagosome maturation. Finally, may play a role in endoplasmic reticulum dynamics and morphology controlling tubulation along microtubules and tubules fusion. May participate in the export of neosynthesized proteins through a Rab-dependent endosomal export route. The protein is Ras-related protein Rab-10 of Diplobatis ommata (Ocellated electric ray).